The chain runs to 249 residues: Tumor necrosis factor receptor superfamily member 13B (249 aa).

At 1–128 (MAMAFCPKDQ…LSSDQLTLYC (128 aa)) the chain is on the extracellular side. TNFR-Cys repeat units lie at residues 5–38 (FCPKDQYWDSSRKSCVSCALTCSQRSQRTCTDFC) and 42–76 (NCRKEQGRYYDHLLGACVSCDSTCTQHPQQCAHFC). 6 cysteine pairs are disulfide-bonded: Cys6/Cys19, Cys22/Cys34, Cys26/Cys38, Cys43/Cys58, Cys61/Cys72, and Cys65/Cys76. Positions 86–116 (LQPELGRPQAGEVEVRSDNSGRHQGSEHGPG) are disordered. Residues 98 to 111 (VEVRSDNSGRHQGS) show a composition bias toward basic and acidic residues. The helical; Signal-anchor for type III membrane protein transmembrane segment at 129–149 (TLGVCLCAIFCCFLVALASFL) threads the bilayer. Residues 150 to 249 (RRRGEPLPSQ…ASTGDARPAT (100 aa)) lie on the Cytoplasmic side of the membrane. Residues 156 to 176 (LPSQPAGPRGSQANSPHAHRP) are disordered.

As to quaternary structure, binds TRAF2, TRAF5 and TRAF6. Binds the NH2-terminal domain of CAMLG with its C-terminus.

The protein resides in the membrane. In terms of biological role, receptor for TNFSF13/APRIL and TNFSF13B/TALL1/BAFF/BLYS that binds both ligands with similar high affinity. Mediates calcineurin-dependent activation of NF-AT, as well as activation of NF-kappa-B and AP-1. Involved in the stimulation of B- and T-cell function and the regulation of humoral immunity. This chain is Tumor necrosis factor receptor superfamily member 13B (Tnfrsf13b), found in Mus musculus (Mouse).